The chain runs to 468 residues: MSQGKIVQIIGAVVDVEFQRNEVPKVYHALKVEGTAITLEVQQQLGDGVVRTIALGSTDGLKRNLLATNTERAISVPVGAGTLGRIMDVLGRPIDEAGDVQASDHWEIHRAAPSYEDQSSSTELLETGIKVIDLMCPFAKGGKVGLFGGAGVGKTVNMMELINNIAKAHSGLSVFAGVGERTREGNDFYHEMKDSNVLDKVAMVYGQMNEPPGNRLRVALTGLTMAEYFRDEKDENGKGKDVLLFVDNIYRYTLAGTEVSALLGRMPSAVGYQPTLAEEMGVLQERITSTKSGSITSIQAVYVPADDLTDPSPATTFAHLDSTVTLSRNIASLGIYPAVDPLDSTSRQMDPLVIGHEHYDTAQRVQQTLQKYKELKDIIAILGMDELSEEDKQSVSRARKIERFFSQPFHVAEVFTGSPGKYVSLKDTIRGFKAICDGEYDHLPEQAFYMVGSIEEAVEKANKMSAKA.

An ATP-binding site is contributed by Gly148 to Thr155.

Belongs to the ATPase alpha/beta chains family. F-type ATPases have 2 components, CF(1) - the catalytic core - and CF(0) - the membrane proton channel. CF(1) has five subunits: alpha(3), beta(3), gamma(1), delta(1), epsilon(1). CF(0) has three main subunits: a(1), b(2) and c(9-12). The alpha and beta chains form an alternating ring which encloses part of the gamma chain. CF(1) is attached to CF(0) by a central stalk formed by the gamma and epsilon chains, while a peripheral stalk is formed by the delta and b chains.

The protein localises to the cell inner membrane. It catalyses the reaction ATP + H2O + 4 H(+)(in) = ADP + phosphate + 5 H(+)(out). Functionally, produces ATP from ADP in the presence of a proton gradient across the membrane. The catalytic sites are hosted primarily by the beta subunits. The polypeptide is ATP synthase subunit beta (Xanthomonas campestris pv. campestris (strain 8004)).